The primary structure comprises 672 residues: COBRA-like protein 10 (672 aa).

A signal peptide spans 1-35; it reads MRAIDVKTGMKIPWDVRYSLSLFIFLSSILFLSNG. N-linked (GlcNAc...) asparagine glycans are attached at residues asparagine 79, asparagine 135, asparagine 264, asparagine 328, asparagine 339, asparagine 368, asparagine 422, asparagine 442, asparagine 483, asparagine 562, asparagine 570, and asparagine 589. In terms of domain architecture, CBM2 spans 502-607; the sequence is KLPCPDNCGV…PVPGKQQSVI (106 aa). Serine 646 carries the GPI-anchor amidated serine lipid modification. Residues 647–672 constitute a propeptide, removed in mature form; that stretch reads SGHRRGISVSMSFVFATIAAFALMMD. Residues 664 to 672 carry the Required for processing by the PIG complex, a critical step for apical plasma membrane localization in pollen tubes motif; that stretch reads IAAFALMMD.

Belongs to the COBRA family. In terms of processing, the GPI-anchor attachment at Ser-646 requires APTG1. Expressed in roots, stems, leaves, flowers and siliques. Specific expression in the pollen tube.

It localises to the cell membrane. The protein localises to the cytoplasm. The protein resides in the vesicle. Involved in the deposition of apical pectin cap and cellulose microfibrils in pollen tubes. Not essential for pollen development, hydration or germination, but required for pollen tubes growth in the female transmitting tract of pistil and toward micropyles, via the perception of ovule guidance cues. The sequence is that of COBRA-like protein 10 from Arabidopsis thaliana (Mouse-ear cress).